The primary structure comprises 283 residues: 1D-myo-inositol 2-acetamido-2-deoxy-alpha-D-glucopyranoside deacetylase (283 aa).

Residues histidine 15, aspartate 18, and histidine 150 each coordinate Zn(2+).

The protein belongs to the MshB deacetylase family. Zn(2+) is required as a cofactor.

It carries out the reaction 1D-myo-inositol 2-acetamido-2-deoxy-alpha-D-glucopyranoside + H2O = 1D-myo-inositol 2-amino-2-deoxy-alpha-D-glucopyranoside + acetate. In terms of biological role, catalyzes the deacetylation of 1D-myo-inositol 2-acetamido-2-deoxy-alpha-D-glucopyranoside (GlcNAc-Ins) in the mycothiol biosynthesis pathway. In Actinosynnema mirum (strain ATCC 29888 / DSM 43827 / JCM 3225 / NBRC 14064 / NCIMB 13271 / NRRL B-12336 / IMRU 3971 / 101), this protein is 1D-myo-inositol 2-acetamido-2-deoxy-alpha-D-glucopyranoside deacetylase.